We begin with the raw amino-acid sequence, 183 residues long: Protein AC4 (183 aa).

Belongs to the geminiviridae protein AC4/C4 family.

Its function is as follows. Pathogenicity determinant. May act as a suppressor of RNA-mediated gene silencing, also known as post-transcriptional gene silencing (PTGS), a mechanism of plant viral defense that limits the accumulation of viral RNAs. This is Protein AC4 from African cassava mosaic virus (isolate West Kenyan 844) (ACMV).